A 74-amino-acid polypeptide reads, in one-letter code: UPF0291 protein lmo0496 (74 aa).

It belongs to the UPF0291 family.

Its subcellular location is the cytoplasm. The sequence is that of UPF0291 protein lmo0496 from Listeria monocytogenes serovar 1/2a (strain ATCC BAA-679 / EGD-e).